Reading from the N-terminus, the 135-residue chain is Thioredoxin H5 (135 aa).

One can recognise a Thioredoxin domain in the interval Glu-13–Arg-128. Active-site nucleophile residues include Cys-54 and Cys-57. Cys-54 and Cys-57 are oxidised to a cystine.

Belongs to the thioredoxin family. Plant H-type subfamily.

Its subcellular location is the cytoplasm. Functionally, probable thiol-disulfide oxidoreductase that may be involved in the redox regulation of a number of cytosolic enzymes. The protein is Thioredoxin H5 of Oryza sativa subsp. japonica (Rice).